The following is a 232-amino-acid chain: Small ribosomal subunit protein uS3 (232 aa).

The KH type-2 domain maps to 39–107 (VRQYLTKELK…PAQINIAEVR (69 aa)).

This sequence belongs to the universal ribosomal protein uS3 family. In terms of assembly, part of the 30S ribosomal subunit. Forms a tight complex with proteins S10 and S14.

Functionally, binds the lower part of the 30S subunit head. Binds mRNA in the 70S ribosome, positioning it for translation. The polypeptide is Small ribosomal subunit protein uS3 (Aliivibrio fischeri (strain MJ11) (Vibrio fischeri)).